A 254-amino-acid polypeptide reads, in one-letter code: Trypsin 3A1 (254 aa).

An N-terminal signal peptide occupies residues 1 to 20 (MNQFLFVSFCALLGLSQVSA). Positions 21 to 27 (ATLSSGR) are cleaved as a propeptide — activation peptide. The Peptidase S1 domain maps to 28–253 (IVGGFQIDIA…VRQWIREVSE (226 aa)). A disulfide bridge links cysteine 53 with cysteine 69. Residues histidine 68 and aspartate 113 each act as charge relay system in the active site. 2 disulfide bridges follow: cysteine 178–cysteine 194 and cysteine 205–cysteine 229. Serine 209 (charge relay system) is an active-site residue.

This sequence belongs to the peptidase S1 family. In terms of tissue distribution, midgut.

It is found in the secreted. Its subcellular location is the extracellular space. It catalyses the reaction Preferential cleavage: Arg-|-Xaa, Lys-|-Xaa.. Major function may be to aid in digestion of the blood meal. This chain is Trypsin 3A1, found in Aedes aegypti (Yellowfever mosquito).